The primary structure comprises 249 residues: DNA repair protein RecO (249 aa).

Belongs to the RecO family.

Functionally, involved in DNA repair and RecF pathway recombination. This chain is DNA repair protein RecO, found in Polaromonas sp. (strain JS666 / ATCC BAA-500).